The sequence spans 495 residues: UDP-glycosyltransferase 73E1 (495 aa).

Residues Ser-299, 355-356 (WA), 373-381 (HCGWNSTIE), and 395-398 (FADQ) each bind UDP-alpha-D-glucose.

The protein belongs to the UDP-glycosyltransferase family.

Functionally, may glycosylate diterpenes or flavonols in leaves. The sequence is that of UDP-glycosyltransferase 73E1 from Stevia rebaudiana (Stevia).